Reading from the N-terminus, the 493-residue chain is Hexokinase-like 1 protein (493 aa).

Positions A38 to A488 constitute a Hexokinase domain. The segment at S93 to V232 is hexokinase small subdomain. Positions 107, 108, and 109 each coordinate ADP. D-glucose contacts are provided by T198, K199, N233, and D234. The tract at residues N233–D477 is hexokinase large subdomain. T257 contributes to the ADP binding site. D-glucose-binding residues include N260, E287, and E317. A442 lines the ADP pocket.

This sequence belongs to the hexokinase family.

The enzyme catalyses a D-hexose + ATP = a D-hexose 6-phosphate + ADP + H(+). The catalysed reaction is D-fructose + ATP = D-fructose 6-phosphate + ADP + H(+). It catalyses the reaction D-glucose + ATP = D-glucose 6-phosphate + ADP + H(+). It functions in the pathway carbohydrate metabolism; hexose metabolism. Its pathway is carbohydrate degradation; glycolysis; D-glyceraldehyde 3-phosphate and glycerone phosphate from D-glucose: step 1/4. Its function is as follows. Fructose and glucose phosphorylating enzyme. In Arabidopsis thaliana (Mouse-ear cress), this protein is Hexokinase-like 1 protein.